Reading from the N-terminus, the 79-residue chain is Major outer membrane lipoprotein Lpp 2 (79 aa).

An N-terminal signal peptide occupies residues 1–21; that stretch reads MNRTNQLILGAVVLGSTLLAG. Cys22 carries the N-palmitoyl cysteine lipid modification. Residue Cys22 is the site of S-diacylglycerol cysteine attachment. 2 consecutive repeats follow at residues 25 to 35 and 39 to 49; these read NAKIDQLSSDV and SAKVEQLSNDV. Positions 28–69 form a coiled coil; the sequence is IDQLSSDVQTLSAKVEQLSNDVNAMRSDVQAAKDDAARANQR. Residue Lys79 is modified to N6-murein peptidoglycan lysine.

This sequence belongs to the Lpp family. As to quaternary structure, homotrimer.

The protein resides in the cell outer membrane. It localises to the secreted. It is found in the cell wall. Functionally, plays an important role in virulence. A highly abundant outer membrane lipoprotein that controls the distance between the inner and outer membranes. The only protein known to be covalently linked to the peptidoglycan network (PGN). Also non-covalently binds the PGN. The link between the cell outer membrane and PGN contributes to maintenance of the structural and functional integrity of the cell envelope, and maintains the correct distance between the PGN and the outer membrane. The sequence is that of Major outer membrane lipoprotein Lpp 2 from Salmonella typhimurium (strain LT2 / SGSC1412 / ATCC 700720).